The following is a 223-amino-acid chain: Putative N-acetylmannosamine-6-phosphate 2-epimerase (223 aa).

It belongs to the NanE family.

It carries out the reaction an N-acyl-D-glucosamine 6-phosphate = an N-acyl-D-mannosamine 6-phosphate. It functions in the pathway amino-sugar metabolism; N-acetylneuraminate degradation; D-fructose 6-phosphate from N-acetylneuraminate: step 3/5. In terms of biological role, converts N-acetylmannosamine-6-phosphate (ManNAc-6-P) to N-acetylglucosamine-6-phosphate (GlcNAc-6-P). In Staphylococcus haemolyticus (strain JCSC1435), this protein is Putative N-acetylmannosamine-6-phosphate 2-epimerase.